Consider the following 26-residue polypeptide: TRSGGACNSHDQCCINFCRKATSTCM.

Intrachain disulfides connect cysteine 7–cysteine 18 and cysteine 13–cysteine 25.

The protein belongs to the conotoxin O1 superfamily. In terms of tissue distribution, expressed by the venom duct.

Its subcellular location is the secreted. The polypeptide is Conotoxin Eb6.18 (E1) (Conus ebraeus (Hebrew cone)).